Here is a 374-residue protein sequence, read N- to C-terminus: Tryptophan--tRNA ligase (374 aa).

The 'HIGH' region signature appears at 81-89; that stretch reads PSGPVHIGH. The 'KMSKS' region signature appears at 258-262; sequence KMSAS.

This sequence belongs to the class-I aminoacyl-tRNA synthetase family.

It is found in the cytoplasm. It catalyses the reaction tRNA(Trp) + L-tryptophan + ATP = L-tryptophyl-tRNA(Trp) + AMP + diphosphate + H(+). In Pyrobaculum arsenaticum (strain DSM 13514 / JCM 11321 / PZ6), this protein is Tryptophan--tRNA ligase.